The following is a 56-amino-acid chain: Large ribosomal subunit protein bL32 (56 aa).

This sequence belongs to the bacterial ribosomal protein bL32 family.

This chain is Large ribosomal subunit protein bL32, found in Prochlorococcus marinus (strain MIT 9215).